A 98-amino-acid chain; its full sequence is NADH-ubiquinone oxidoreductase chain 4L (98 aa).

The next 3 membrane-spanning stretches (helical) occupy residues 1–21, 27–47, and 61–81; these read MIPT…GMLT, VASL…TTLI, and IILL…LISI.

This sequence belongs to the complex I subunit 4L family. Core subunit of respiratory chain NADH dehydrogenase (Complex I) which is composed of 45 different subunits.

It localises to the mitochondrion inner membrane. The catalysed reaction is a ubiquinone + NADH + 5 H(+)(in) = a ubiquinol + NAD(+) + 4 H(+)(out). Core subunit of the mitochondrial membrane respiratory chain NADH dehydrogenase (Complex I) which catalyzes electron transfer from NADH through the respiratory chain, using ubiquinone as an electron acceptor. Part of the enzyme membrane arm which is embedded in the lipid bilayer and involved in proton translocation. This is NADH-ubiquinone oxidoreductase chain 4L (MT-ND4L) from Macaca nigra (Celebes black macaque).